The primary structure comprises 305 residues: Phosphoribosylaminoimidazole-succinocarboxamide synthase (305 aa).

This sequence belongs to the SAICAR synthetase family.

The enzyme catalyses 5-amino-1-(5-phospho-D-ribosyl)imidazole-4-carboxylate + L-aspartate + ATP = (2S)-2-[5-amino-1-(5-phospho-beta-D-ribosyl)imidazole-4-carboxamido]succinate + ADP + phosphate + 2 H(+). Its pathway is purine metabolism; IMP biosynthesis via de novo pathway; 5-amino-1-(5-phospho-D-ribosyl)imidazole-4-carboxamide from 5-amino-1-(5-phospho-D-ribosyl)imidazole-4-carboxylate: step 1/2. The protein is Phosphoribosylaminoimidazole-succinocarboxamide synthase of Albidiferax ferrireducens (strain ATCC BAA-621 / DSM 15236 / T118) (Rhodoferax ferrireducens).